A 219-amino-acid polypeptide reads, in one-letter code: Abasic site processing protein YobE (219 aa).

C2 functions as the Nucleophile in the catalytic mechanism. C2 carries the post-translational modification Thiazolidine linkage to a ring-opened DNA abasic site. E106 is an active-site residue.

Belongs to the SOS response-associated peptidase family.

Formation and reversal of DNA-protein cross-link depends on DNA context. Catalyzes formation of the thiazolidine linkage in presence of abasic sites in single-stranded DNA. Mediates the reversal of the thiazolidine cross-link in presence of double stranded DNA. Its function is as follows. Sensor of abasic sites in single-stranded DNA (ssDNA) required to preserve genome integrity by promoting error-free repair of abasic sites. Recognizes and binds abasic sites in ssDNA at replication forks and chemically modifies the lesion by forming a covalent cross-link with DNA: forms a stable thiazolidine linkage between a ring-opened abasic site and the alpha-amino and sulfhydryl substituents of its N-terminal catalytic cysteine residue. The DNA-protein cross-link is then reversed: able to catalyze the reversal of the thiazolidine cross-link and cycle between a cross-link and a non-cross-linked state depending on DNA context: mediates self-reversal of the thiazolidine cross-link in double stranded DNA. May act as a protease: mediates autocatalytic processing of its N-terminal methionine in order to expose the catalytic cysteine. This Bacillus subtilis (strain 168) protein is Abasic site processing protein YobE (yobE).